The chain runs to 469 residues: Cyclin-dependent kinase 14 (469 aa).

A phosphoserine mark is found at Ser-24, Ser-78, and Ser-95. The disordered stretch occupies residues 103-133 (FKSSSAGKESPKVRRHSSPSSPTSPKFGKAD). Position 134 is a phosphoserine (Ser-134). The region spanning 135–419 (YEKLEKLGEG…AQAALSHEYF (285 aa)) is the Protein kinase domain. ATP-binding positions include 141-149 (LGEGSYATV) and Lys-164. The Proton acceptor role is filled by Asp-256. Positions 449 to 469 (ESMRAFGKNNSYGKSLSNSKH) are disordered. A compositionally biased stretch (polar residues) spans 456-469 (KNNSYGKSLSNSKH).

Belongs to the protein kinase superfamily. CMGC Ser/Thr protein kinase family. CDC2/CDKX subfamily. In terms of assembly, found in a complex with LRP6, CCNY and CAPRIN2 during G2/M stage; CAPRIN2 functions as a scaffold for the complex by binding to CCNY via its N terminus and to CDK14 via its C terminus. Interacts with CCNY; CCNY mediates its recruitment to the plasma membrane and promotes phosphorylation of LRP6. Interacts with CCDN3 and CDKN1A. Interacts with SEPT8. Interacts with 14-3-3 proteina YWHAB, YWHAE, YWHAH and YWHAQ. In the adult, widely expressed at low levels except in brain, kidney and testis where expression is high. In the brain, detected in cortex, hippocampus, dentate gyrus, amygdala cortex, parasubiculum and cerebellum. In the embryo, expressed predominantly in the nervous system.

Its subcellular location is the cell membrane. It is found in the cytoplasm. It localises to the nucleus. It catalyses the reaction L-seryl-[protein] + ATP = O-phospho-L-seryl-[protein] + ADP + H(+). The enzyme catalyses L-threonyl-[protein] + ATP = O-phospho-L-threonyl-[protein] + ADP + H(+). Serine/threonine-protein kinase activity is promoted by associated cyclins CCDN3 and CCNY and repressed by CDKN1A. Functionally, serine/threonine-protein kinase involved in the control of the eukaryotic cell cycle, whose activity is controlled by an associated cyclin. Acts as a cell-cycle regulator of Wnt signaling pathway during G2/M phase by mediating the phosphorylation of LRP6 at 'Ser-1490', leading to the activation of the Wnt signaling pathway. Acts as a regulator of cell cycle progression and cell proliferation via its interaction with CCDN3. Phosphorylates RB1 in vitro, however the relevance of such result remains to be confirmed in vivo. May also play a role in meiosis, neuron differentiation and may indirectly act as a negative regulator of insulin-responsive glucose transport. The sequence is that of Cyclin-dependent kinase 14 (Cdk14) from Mus musculus (Mouse).